We begin with the raw amino-acid sequence, 61 residues long: Small ribosomal subunit protein uS14 (61 aa).

Zn(2+) contacts are provided by Cys-24, Cys-27, Cys-40, and Cys-43.

This sequence belongs to the universal ribosomal protein uS14 family. Zinc-binding uS14 subfamily. As to quaternary structure, part of the 30S ribosomal subunit. Contacts proteins S3 and S10. It depends on Zn(2+) as a cofactor.

Binds 16S rRNA, required for the assembly of 30S particles and may also be responsible for determining the conformation of the 16S rRNA at the A site. This is Small ribosomal subunit protein uS14 from Macrococcus caseolyticus (strain JCSC5402) (Macrococcoides caseolyticum).